The sequence spans 169 residues: Peptide deformylase 1 (169 aa).

Residues Cys-91 and His-133 each contribute to the Fe cation site. Glu-134 is an active-site residue. Position 137 (His-137) interacts with Fe cation.

This sequence belongs to the polypeptide deformylase family. Fe(2+) serves as cofactor.

It carries out the reaction N-terminal N-formyl-L-methionyl-[peptide] + H2O = N-terminal L-methionyl-[peptide] + formate. Removes the formyl group from the N-terminal Met of newly synthesized proteins. Requires at least a dipeptide for an efficient rate of reaction. N-terminal L-methionine is a prerequisite for activity but the enzyme has broad specificity at other positions. The polypeptide is Peptide deformylase 1 (Vibrio cholerae serotype O1 (strain ATCC 39315 / El Tor Inaba N16961)).